A 160-amino-acid polypeptide reads, in one-letter code: Putative 4-hydroxy-4-methyl-2-oxoglutarate aldolase (160 aa).

Residues Gly-76–Leu-79 and Arg-98 contribute to the substrate site. Asp-99 serves as a coordination point for a divalent metal cation.

This sequence belongs to the class II aldolase/RraA-like family. In terms of assembly, homotrimer. It depends on a divalent metal cation as a cofactor.

It catalyses the reaction 4-hydroxy-4-methyl-2-oxoglutarate = 2 pyruvate. The catalysed reaction is oxaloacetate + H(+) = pyruvate + CO2. Its function is as follows. Catalyzes the aldol cleavage of 4-hydroxy-4-methyl-2-oxoglutarate (HMG) into 2 molecules of pyruvate. Also contains a secondary oxaloacetate (OAA) decarboxylase activity due to the common pyruvate enolate transition state formed following C-C bond cleavage in the retro-aldol and decarboxylation reactions. The sequence is that of Putative 4-hydroxy-4-methyl-2-oxoglutarate aldolase from Deinococcus radiodurans (strain ATCC 13939 / DSM 20539 / JCM 16871 / CCUG 27074 / LMG 4051 / NBRC 15346 / NCIMB 9279 / VKM B-1422 / R1).